The following is a 69-amino-acid chain: Putative membrane protein insertion efficiency factor (69 aa).

The protein belongs to the UPF0161 family.

The protein localises to the cell membrane. Functionally, could be involved in insertion of integral membrane proteins into the membrane. In Clostridium botulinum (strain Okra / Type B1), this protein is Putative membrane protein insertion efficiency factor.